Here is an 829-residue protein sequence, read N- to C-terminus: Periplasmic nitrate reductase (829 aa).

Residues 1–30 constitute a signal peptide (tat-type signal); sequence MKMTRRAFVKANAAASAAAVAGITLPASAA. One can recognise a 4Fe-4S Mo/W bis-MGD-type domain in the interval 41-97; that stretch reads ITWDKAPCRFCGTGCSVLVGTQNGKVVATQGDPEAPVNKGLNCIKGYFLSKIMYGQD. The [4Fe-4S] cluster site is built by C48, C51, C55, and C83. Mo-bis(molybdopterin guanine dinucleotide)-binding positions include K85, Q152, N177, C181, 214–221, 245–249, 264–266, M374, Q378, N484, 510–511, K533, D560, and 718–727; these read WGSNMAEM, STYYH, QSD, SD, and TGRVLEHWHT. F794 provides a ligand contact to substrate. Mo-bis(molybdopterin guanine dinucleotide) is bound by residues N802 and K819.

This sequence belongs to the prokaryotic molybdopterin-containing oxidoreductase family. NasA/NapA/NarB subfamily. Component of the periplasmic nitrate reductase NapAB complex composed of NapA and NapB. [4Fe-4S] cluster serves as cofactor. Requires Mo-bis(molybdopterin guanine dinucleotide) as cofactor. Predicted to be exported by the Tat system. The position of the signal peptide cleavage has not been experimentally proven.

It is found in the periplasm. The catalysed reaction is 2 Fe(II)-[cytochrome] + nitrate + 2 H(+) = 2 Fe(III)-[cytochrome] + nitrite + H2O. In terms of biological role, catalytic subunit of the periplasmic nitrate reductase complex NapAB. Receives electrons from NapB and catalyzes the reduction of nitrate to nitrite. This Vibrio vulnificus (strain CMCP6) protein is Periplasmic nitrate reductase.